We begin with the raw amino-acid sequence, 473 residues long: Biotin-dependent acetyl-/propionyl-coenzyme A carboxylase beta6 subunit (473 aa).

The region spanning 1 to 224 is the CoA carboxyltransferase N-terminal domain; that stretch reads MTIMAPEAVG…QGHFDRSKAE (224 aa). The CoA carboxyltransferase C-terminal domain occupies 225–473; sequence AGDTDIHALL…RRGRHKNIPL (249 aa).

The protein belongs to the AccD/PCCB family. The biotin-dependent acyl-CoA carboxylase complex is composed of AccA3, which contains the biotin carboxylase (BC) and biotin carboxyl carrier protein (BCCP) domains, and AccD6, which contains the carboxyl transferase (CT) domain.

The enzyme catalyses N(6)-carboxybiotinyl-L-lysyl-[protein] + acetyl-CoA = N(6)-biotinyl-L-lysyl-[protein] + malonyl-CoA. It carries out the reaction N(6)-carboxybiotinyl-L-lysyl-[protein] + propanoyl-CoA = methylmalonyl-CoA + N(6)-biotinyl-L-lysyl-[protein]. Its pathway is lipid metabolism; fatty acid biosynthesis. The protein operates within lipid metabolism; mycolic acid biosynthesis. Functionally, component of a biotin-dependent acyl-CoA carboxylase complex. This subunit transfers the CO2 from carboxybiotin to the CoA ester substrate. When associated with the alpha3 subunit AccA3, is involved in the carboxylation of acetyl-CoA and propionyl-CoA. The polypeptide is Biotin-dependent acetyl-/propionyl-coenzyme A carboxylase beta6 subunit (accD6) (Mycobacterium bovis (strain ATCC BAA-935 / AF2122/97)).